A 122-amino-acid chain; its full sequence is Ribosome-binding factor A (122 aa).

Belongs to the RbfA family. As to quaternary structure, monomer. Binds 30S ribosomal subunits, but not 50S ribosomal subunits or 70S ribosomes.

The protein localises to the cytoplasm. In terms of biological role, one of several proteins that assist in the late maturation steps of the functional core of the 30S ribosomal subunit. Associates with free 30S ribosomal subunits (but not with 30S subunits that are part of 70S ribosomes or polysomes). Required for efficient processing of 16S rRNA. May interact with the 5'-terminal helix region of 16S rRNA. In Cupriavidus pinatubonensis (strain JMP 134 / LMG 1197) (Cupriavidus necator (strain JMP 134)), this protein is Ribosome-binding factor A.